The chain runs to 599 residues: Aspartate--tRNA(Asp/Asn) ligase (599 aa).

Glu180 provides a ligand contact to L-aspartate. The tract at residues 204–207 (QLLK) is aspartate. Residue Arg226 coordinates L-aspartate. ATP contacts are provided by residues 226-228 (RDE) and Gln235. His457 is a binding site for L-aspartate. Glu491 contacts ATP. Arg498 contacts L-aspartate. An ATP-binding site is contributed by 543 to 546 (GWDR). Residues 565 to 599 (KAGGGRDPLTGAPAPISDEQRAETGVDYDPDADEN) form a disordered region. Over residues 590–599 (VDYDPDADEN) the composition is skewed to acidic residues.

It belongs to the class-II aminoacyl-tRNA synthetase family. Type 1 subfamily. As to quaternary structure, homodimer.

Its subcellular location is the cytoplasm. The catalysed reaction is tRNA(Asx) + L-aspartate + ATP = L-aspartyl-tRNA(Asx) + AMP + diphosphate. In terms of biological role, aspartyl-tRNA synthetase with relaxed tRNA specificity since it is able to aspartylate not only its cognate tRNA(Asp) but also tRNA(Asn). Reaction proceeds in two steps: L-aspartate is first activated by ATP to form Asp-AMP and then transferred to the acceptor end of tRNA(Asp/Asn). The protein is Aspartate--tRNA(Asp/Asn) ligase of Bifidobacterium longum (strain DJO10A).